The following is a 311-amino-acid chain: MELENQTRVTKFILVGFPGSLSMRAAMFLIFLVAYILTVAENVIIILLVLQNRPLHKPMYFFLANLSFLETWYISVTVPKLLFSFWSVNNSISFTLCMIQLYFFIALMCTECVLLAAMAYDRYVAICRPLHYPTIMSHGLCFRLALGSWAIGFGISLAKIYFISCLSFCGPNVINHFFCDISPVLNLSCTDMSITELVDFILALVIFLFPLFITVLSYGCILATILCMPTGKQKAFSTCASHLVVVTIFYSAIIFMYARPRVIHAFNMNKIISIFYAIVTPSLNPFIYCLRNREVKEALKKLAYCQASRSD.

Residues M1–A25 lie on the Extracellular side of the membrane. N5 is a glycosylation site (N-linked (GlcNAc...) asparagine). Residues A26–I46 traverse the membrane as a helical segment. At L47–P54 the chain is on the cytoplasmic side. A helical transmembrane segment spans residues L55–S75. The Extracellular segment spans residues V76–I99. The cysteines at positions 97 and 189 are disulfide-linked. A helical membrane pass occupies residues Q100–Y120. At D121–G139 the chain is on the cytoplasmic side. A helical transmembrane segment spans residues L140–I160. Topologically, residues Y161–E196 are extracellular. Residues L197–S217 traverse the membrane as a helical segment. At Y218–A235 the chain is on the cytoplasmic side. Residues F236–M256 form a helical membrane-spanning segment. Residues Y257–N269 are Extracellular-facing. A helical transmembrane segment spans residues K270–L290. Residues R291–D311 lie on the Cytoplasmic side of the membrane.

This sequence belongs to the G-protein coupled receptor 1 family.

Its subcellular location is the cell membrane. In terms of biological role, odorant receptor. The sequence is that of Olfactory receptor 6B1 (OR6B1) from Homo sapiens (Human).